The following is a 392-amino-acid chain: Phospho-N-acetylmuramoyl-pentapeptide-transferase (392 aa).

The next 11 membrane-spanning stretches (helical) occupy residues 24-44 (YLTM…LLAG), 76-96 (TMGG…WFDL), 100-120 (FVWI…VDDW), 137-157 (YFWQ…CISE), 170-190 (WVQS…VPFF), 193-213 (VSYP…IVGA), 225-245 (GLAI…AYVT), 262-282 (SGEL…FLWF), 289-309 (VFMG…IAVI), 314-334 (IVLA…MLQV), and 369-389 (QVVI…LSTL).

This sequence belongs to the glycosyltransferase 4 family. MraY subfamily. Mg(2+) serves as cofactor.

The protein localises to the cell inner membrane. It catalyses the reaction UDP-N-acetyl-alpha-D-muramoyl-L-alanyl-gamma-D-glutamyl-meso-2,6-diaminopimeloyl-D-alanyl-D-alanine + di-trans,octa-cis-undecaprenyl phosphate = di-trans,octa-cis-undecaprenyl diphospho-N-acetyl-alpha-D-muramoyl-L-alanyl-D-glutamyl-meso-2,6-diaminopimeloyl-D-alanyl-D-alanine + UMP. It participates in cell wall biogenesis; peptidoglycan biosynthesis. In terms of biological role, catalyzes the initial step of the lipid cycle reactions in the biosynthesis of the cell wall peptidoglycan: transfers peptidoglycan precursor phospho-MurNAc-pentapeptide from UDP-MurNAc-pentapeptide onto the lipid carrier undecaprenyl phosphate, yielding undecaprenyl-pyrophosphoryl-MurNAc-pentapeptide, known as lipid I. This is Phospho-N-acetylmuramoyl-pentapeptide-transferase from Delftia acidovorans (strain DSM 14801 / SPH-1).